A 134-amino-acid polypeptide reads, in one-letter code: Fatty acid-binding protein, muscle (134 aa).

Residues R109 and 129–131 (RIY) each bind (9Z)-octadecenoate.

This sequence belongs to the calycin superfamily. Fatty-acid binding protein (FABP) family. Monomer. As to expression, adult flight muscle.

The protein localises to the cytoplasm. Functionally, binds fatty acids in a 1:1 molar ratio. This chain is Fatty acid-binding protein, muscle, found in Schistocerca gregaria (Desert locust).